The following is a 171-amino-acid chain: Anthrone oxygenase dmxR16 (171 aa).

Helical transmembrane passes span 21-41 (VIAAAFLSAITAGAMANISMI), 67-87 (GHIILPGICVGTCGLYAFSAL), and 96-116 (YALAGITTLSLVPFTWVFMTP). 2 N-linked (GlcNAc...) asparagine glycosylation sites follow: Asn-118 and Asn-129. The helical transmembrane segment at 145 to 165 (WLHATRSMFPLIGAILGFTGI) threads the bilayer.

It belongs to the anthrone oxygenase family.

It is found in the membrane. The enzyme catalyses emodin anthrone + O2 = emodin + H2O + H(+). Its pathway is secondary metabolite biosynthesis. Functionally, anthrone oxygenase; part of the gene cluster that mediates the biosynthesis of the dimeric xanthones cryptosporioptides. The pathway begins with the synthesis of atrochrysone thioester by the polyketide synthase dmx-nrPKS. The atrochrysone carboxyl ACP thioesterase dmxR1 then breaks the thioester bond and releases the atrochrysone carboxylic acid from dmx-nrPKS. Atrochrysone carboxylic acid is decarboxylated by the decarboxylase dmxR15, and oxidized by the anthrone oxygenase dmxR16 to yield emodin. Emodin is then reduced to emodin hydroquinone by the oxidoreductase dmxR7. A-ring reduction by the short chain dehydrogenase dmxR18, dehydration by the scytalone dehydratase-like protein dmxR17 and probable spontaneous re-oxidation, results in overall deoxygenation to chrysophanol. Baeyer-Villiger oxidation by the Baeyer-Villiger monooxygenase (BVMO) dmxR6 then yields monodictylactone in equilibrium with monodictyphenone. In the case of the cryptosporioptides biosynthesis, monodictylactone is reduced at C-12 to an alcohol (by the short chain dehydrogenases dmxR12 or dmxR8) and hydroxylated at C-5 by dmxR9, yielding the electron-rich aromatic which could eliminate H(2)O to form the ortho-quinonemethide, followed by tautomerisation to paraquinone and complete the formal reduction to produce the 10-methylgroup. Conjugate addition of C-4a-OH to the resulting paraquinone by the monooxygenase dmxR10 then gives cyclohexadienone, which is then reduced at C-5 by the short chain dehydrogenase dmxR3 to give the dihydroxanthone. The 6,7-epoxide in the cryptosporioptides could be introduced by the cytochrome P450 monooxygenase dmxL3. The highly reducing PKS dmxL2 manufactures butyrate, which is further carboxylated by dmxL1 to form ethylmalonate. It is not yet clear whether the carboxylation occurs while the butyrate is attached to the ACP of dmxL2, but this unusual fungal metabolite could then be esterified to O-5 by the O-acetyltransferase dmxR13. Finally, dimerization performed by dmxR5 gives the observed dimers cryptosporioptides A, B and C as the final products of the pathway. This chain is Anthrone oxygenase dmxR16, found in Cryptosporiopsis sp. (strain 8999).